The chain runs to 250 residues: Ubiquinone/menaquinone biosynthesis C-methyltransferase UbiE (250 aa).

S-adenosyl-L-methionine-binding positions include Thr-73, Asp-94, 122-123, and Ser-139; that span reads NS.

This sequence belongs to the class I-like SAM-binding methyltransferase superfamily. MenG/UbiE family.

The catalysed reaction is a 2-demethylmenaquinol + S-adenosyl-L-methionine = a menaquinol + S-adenosyl-L-homocysteine + H(+). The enzyme catalyses a 2-methoxy-6-(all-trans-polyprenyl)benzene-1,4-diol + S-adenosyl-L-methionine = a 5-methoxy-2-methyl-3-(all-trans-polyprenyl)benzene-1,4-diol + S-adenosyl-L-homocysteine + H(+). The protein operates within quinol/quinone metabolism; menaquinone biosynthesis; menaquinol from 1,4-dihydroxy-2-naphthoate: step 2/2. It functions in the pathway cofactor biosynthesis; ubiquinone biosynthesis. In terms of biological role, methyltransferase required for the conversion of demethylmenaquinol (DMKH2) to menaquinol (MKH2) and the conversion of 2-polyprenyl-6-methoxy-1,4-benzoquinol (DDMQH2) to 2-polyprenyl-3-methyl-6-methoxy-1,4-benzoquinol (DMQH2). This is Ubiquinone/menaquinone biosynthesis C-methyltransferase UbiE from Wigglesworthia glossinidia brevipalpis.